Here is a 138-residue protein sequence, read N- to C-terminus: uncharacterized protein (138 aa).

Positions P84–G104 are disordered. A compositionally biased stretch (low complexity) spans P85–P98.

The protein to M.pneumoniae MPN_413 and MPN_463.

This is an uncharacterized protein from Mycoplasma pneumoniae (strain ATCC 29342 / M129 / Subtype 1) (Mycoplasmoides pneumoniae).